The primary structure comprises 317 residues: Melanocyte-stimulating hormone receptor (317 aa).

The Extracellular portion of the chain corresponds to 1 to 37 (MPAQGSQRSLLGSLNSTLMATSSLGLSANQSGPQCLE). 2 N-linked (GlcNAc...) asparagine glycosylation sites follow: Asn15 and Asn29. Residues 38 to 63 (VSVPDGLFLCLGLVSLVENMLVVAAI) form a helical membrane-spanning segment. Residues 64 to 72 (AKNRNLHSP) are Cytoplasmic-facing. A helical membrane pass occupies residues 73 to 93 (MYCFICCLALSDLLVSVSNVL). Residues 94–118 (ETAVMLLLEAGALAAQATVVQQLDN) are Extracellular-facing. The chain crosses the membrane as a helical span at residues 119-140 (IIDVLVCSSMVSSLCFLGAIAM). Over 141-163 (DRYISIFYALRYHSIVTLSRAQW) the chain is Cytoplasmic. A helical membrane pass occupies residues 164-183 (ATAAVWAAGILSSTLFIAYY). The Extracellular portion of the chain corresponds to 184 to 191 (DHTAVLLC). The helical transmembrane segment at 192–211 (LVVFFLAMLVLMAVLYAHML) threads the bilayer. Residues 212–240 (TQACQHVQGITRLHKRQHLVQQGFGLKGA) are Cytoplasmic-facing. A helical membrane pass occupies residues 241 to 266 (ATLTILLGVFLLCWGPFFLHLTLIAV). The Extracellular portion of the chain corresponds to 267–279 (CPQHPTCSCVFKN). A helical transmembrane segment spans residues 280–300 (FKLFLALIICNAIVDPLIYAF). Over 301-317 (RXQELRKTLKEVLLFSW) the chain is Cytoplasmic.

Belongs to the G-protein coupled receptor 1 family. As to quaternary structure, interacts with MGRN1, but does not undergo MGRN1-mediated ubiquitination; this interaction competes with GNAS-binding and thus inhibits agonist-induced cAMP production. Interacts with OPN3; the interaction results in a decrease in MC1R-mediated cAMP signaling and ultimately a decrease in melanin production in melanocytes.

It is found in the cell membrane. Functionally, receptor for MSH (alpha, beta and gamma) and ACTH. The activity of this receptor is mediated by G proteins which activate adenylate cyclase. Mediates melanogenesis, the production of eumelanin (black/brown) and phaeomelanin (red/yellow), via regulation of cAMP signaling in melanocytes. The chain is Melanocyte-stimulating hormone receptor (MC1R) from Loris tardigradus (Slender loris).